The primary structure comprises 347 residues: Eukaryotic translation initiation factor 3 subunit I (347 aa).

WD repeat units follow at residues G8 to E49, G50 to T89, T146 to G186, A198 to T237, A239 to E278, and G295 to Y336.

It belongs to the eIF-3 subunit I family. In terms of assembly, component of the eukaryotic translation initiation factor 3 (eIF-3) complex.

The protein localises to the cytoplasm. Its function is as follows. Component of the eukaryotic translation initiation factor 3 (eIF-3) complex, which is involved in protein synthesis of a specialized repertoire of mRNAs and, together with other initiation factors, stimulates binding of mRNA and methionyl-tRNAi to the 40S ribosome. The eIF-3 complex specifically targets and initiates translation of a subset of mRNAs involved in cell proliferation. The chain is Eukaryotic translation initiation factor 3 subunit I from Mycosarcoma maydis (Corn smut fungus).